Reading from the N-terminus, the 710-residue chain is Cleavage and polyadenylation factor complex subunit C74.02c (710 aa).

A compositionally biased stretch (polar residues) spans Met-1–Tyr-30. 3 disordered regions span residues Met-1–Asp-42, Ala-85–Asn-170, and Gly-361–Trp-510. Low complexity predominate over residues Ser-86–Ser-108. A compositionally biased stretch (polar residues) spans Asn-109–Asn-170. 2 stretches are compositionally biased toward low complexity: residues Gly-361–Ser-383 and Leu-401–Lys-420. The span at Gln-421–Ser-430 shows a compositional bias: polar residues. Over residues Lys-437 to Ser-447 the composition is skewed to basic and acidic residues.

Component of the cleavage and polyadenylation factor (CPF) complex.

The protein localises to the cytoplasm. The protein resides in the nucleus. Its function is as follows. RNA-binding component of the cleavage and polyadenylation factor (CPF) complex, which plays a key role in polyadenylation-dependent pre-mRNA 3'-end formation. Involved in poly(A) site recognition. May be involved in coupling transcription termination and mRNA 3'-end formation. This chain is Cleavage and polyadenylation factor complex subunit C74.02c, found in Schizosaccharomyces pombe (strain 972 / ATCC 24843) (Fission yeast).